The following is an 856-amino-acid chain: DNA mismatch repair protein MutS (856 aa).

ATP is bound at residue 600–607; it reads GPNMSGKS.

It belongs to the DNA mismatch repair MutS family.

In terms of biological role, this protein is involved in the repair of mismatches in DNA. It is possible that it carries out the mismatch recognition step. This protein has a weak ATPase activity. This chain is DNA mismatch repair protein MutS, found in Lactobacillus acidophilus (strain ATCC 700396 / NCK56 / N2 / NCFM).